Reading from the N-terminus, the 188-residue chain is Probable nicotinate-nucleotide adenylyltransferase (188 aa).

The protein belongs to the NadD family.

It catalyses the reaction nicotinate beta-D-ribonucleotide + ATP + H(+) = deamido-NAD(+) + diphosphate. It participates in cofactor biosynthesis; NAD(+) biosynthesis; deamido-NAD(+) from nicotinate D-ribonucleotide: step 1/1. Catalyzes the reversible adenylation of nicotinate mononucleotide (NaMN) to nicotinic acid adenine dinucleotide (NaAD). This Sulfurovum sp. (strain NBC37-1) protein is Probable nicotinate-nucleotide adenylyltransferase.